A 345-amino-acid chain; its full sequence is Probable dual-specificity RNA methyltransferase RlmN (345 aa).

The active-site Proton acceptor is Glu90. The Radical SAM core domain occupies 96-327; sequence QSYGNSVCVT…CIVRREFGHD (232 aa). The cysteines at positions 103 and 332 are disulfide-linked. Residues Cys110, Cys114, and Cys117 each contribute to the [4Fe-4S] cluster site. S-adenosyl-L-methionine is bound by residues 160-161, Ser192, 215-217, and Asn291; these read GE and SLH. Cys332 serves as the catalytic S-methylcysteine intermediate.

The protein belongs to the radical SAM superfamily. RlmN family. It depends on [4Fe-4S] cluster as a cofactor.

The protein localises to the cytoplasm. It catalyses the reaction adenosine(2503) in 23S rRNA + 2 reduced [2Fe-2S]-[ferredoxin] + 2 S-adenosyl-L-methionine = 2-methyladenosine(2503) in 23S rRNA + 5'-deoxyadenosine + L-methionine + 2 oxidized [2Fe-2S]-[ferredoxin] + S-adenosyl-L-homocysteine. The enzyme catalyses adenosine(37) in tRNA + 2 reduced [2Fe-2S]-[ferredoxin] + 2 S-adenosyl-L-methionine = 2-methyladenosine(37) in tRNA + 5'-deoxyadenosine + L-methionine + 2 oxidized [2Fe-2S]-[ferredoxin] + S-adenosyl-L-homocysteine. Its function is as follows. Specifically methylates position 2 of adenine 2503 in 23S rRNA and position 2 of adenine 37 in tRNAs. The protein is Probable dual-specificity RNA methyltransferase RlmN of Spiroplasma citri.